The following is a 493-amino-acid chain: Aspartyl/glutamyl-tRNA(Asn/Gln) amidotransferase subunit B (493 aa).

Residues histidine 268 to phenylalanine 291 form a disordered region. Basic and acidic residues predominate over residues arginine 280–phenylalanine 291.

It belongs to the GatB/GatE family. GatB subfamily. As to quaternary structure, heterotrimer of A, B and C subunits.

It catalyses the reaction L-glutamyl-tRNA(Gln) + L-glutamine + ATP + H2O = L-glutaminyl-tRNA(Gln) + L-glutamate + ADP + phosphate + H(+). The enzyme catalyses L-aspartyl-tRNA(Asn) + L-glutamine + ATP + H2O = L-asparaginyl-tRNA(Asn) + L-glutamate + ADP + phosphate + 2 H(+). Allows the formation of correctly charged Asn-tRNA(Asn) or Gln-tRNA(Gln) through the transamidation of misacylated Asp-tRNA(Asn) or Glu-tRNA(Gln) in organisms which lack either or both of asparaginyl-tRNA or glutaminyl-tRNA synthetases. The reaction takes place in the presence of glutamine and ATP through an activated phospho-Asp-tRNA(Asn) or phospho-Glu-tRNA(Gln). In Corynebacterium glutamicum (strain ATCC 13032 / DSM 20300 / JCM 1318 / BCRC 11384 / CCUG 27702 / LMG 3730 / NBRC 12168 / NCIMB 10025 / NRRL B-2784 / 534), this protein is Aspartyl/glutamyl-tRNA(Asn/Gln) amidotransferase subunit B.